We begin with the raw amino-acid sequence, 344 residues long: Aspartate-semialdehyde dehydrogenase (344 aa).

NADP(+)-binding positions include 10–13 (TGQV) and 38–39 (RS). Arg-101 is a phosphate binding site. The Acyl-thioester intermediate role is filled by Cys-131. Position 158 (Gln-158) interacts with substrate. Residue 161–162 (SG) participates in NADP(+) binding. Lys-228 is a binding site for phosphate. Position 250 (Arg-250) interacts with substrate. Residue His-257 is the Proton acceptor of the active site. Asn-326 contributes to the NADP(+) binding site.

It belongs to the aspartate-semialdehyde dehydrogenase family. Homodimer.

It carries out the reaction L-aspartate 4-semialdehyde + phosphate + NADP(+) = 4-phospho-L-aspartate + NADPH + H(+). It participates in amino-acid biosynthesis; L-lysine biosynthesis via DAP pathway; (S)-tetrahydrodipicolinate from L-aspartate: step 2/4. The protein operates within amino-acid biosynthesis; L-methionine biosynthesis via de novo pathway; L-homoserine from L-aspartate: step 2/3. It functions in the pathway amino-acid biosynthesis; L-threonine biosynthesis; L-threonine from L-aspartate: step 2/5. Its function is as follows. Catalyzes the NADPH-dependent formation of L-aspartate-semialdehyde (L-ASA) by the reductive dephosphorylation of L-aspartyl-4-phosphate. This chain is Aspartate-semialdehyde dehydrogenase, found in Corynebacterium glutamicum (strain ATCC 13032 / DSM 20300 / JCM 1318 / BCRC 11384 / CCUG 27702 / LMG 3730 / NBRC 12168 / NCIMB 10025 / NRRL B-2784 / 534).